Consider the following 199-residue polypeptide: Interleukin-11 (199 aa).

An N-terminal signal peptide occupies residues 1-21 (MNCVCRLVLVVLSLWPDRVVA). Residues 182 to 190 (HLTLDWAVR) form an important for interaction with IL11RA and for the stimulation of cell proliferation region.

It belongs to the IL-6 superfamily. Interacts with either IL11RA1 or IL11RA2 to associate with IL6ST, giving rise to a multimeric signaling complex.

It is found in the secreted. In terms of biological role, cytokine that stimulates the proliferation of hematopoietic stem cells and megakaryocyte progenitor cells and induces megakaryocyte maturation resulting in increased platelet production. Also promotes the proliferation of hepatocytes in response to liver damage. Binding to its receptor formed by IL6ST and either IL11RA1 or IL11RA2 activates a signaling cascade that promotes cell proliferation, also in the context of various cancers. Signaling leads to the activation of intracellular protein kinases and the phosphorylation of STAT3. The interaction with the membrane-bound IL11RA and IL6ST stimulates 'classic signaling', whereas the binding of IL11 and soluble IL11RA to IL6ST stimulates 'trans-signaling'. The polypeptide is Interleukin-11 (Mus musculus (Mouse)).